The sequence spans 162 residues: Putative auxin-responsive protein IAA28 (162 aa).

Residues S23–A118 enclose the PB1 domain. The segment at N122–D141 is disordered.

Belongs to the Aux/IAA family. Homodimers and heterodimers.

It localises to the nucleus. In terms of biological role, aux/IAA proteins are short-lived transcriptional factors that function as repressors of early auxin response genes at low auxin concentrations. The protein is Putative auxin-responsive protein IAA28 (IAA28) of Oryza sativa subsp. japonica (Rice).